The following is a 318-amino-acid chain: Pseudouridine-5'-phosphate glycosidase 1 (318 aa).

Glutamate 29 (proton donor) is an active-site residue. The substrate site is built by lysine 90 and valine 110. Aspartate 142 contributes to the Mn(2+) binding site. Position 144–146 (144–146 (SAD)) interacts with substrate. The active-site Nucleophile is the lysine 163.

The protein belongs to the pseudouridine-5'-phosphate glycosidase family. In terms of assembly, homotrimer. Mn(2+) is required as a cofactor.

The catalysed reaction is D-ribose 5-phosphate + uracil = psi-UMP + H2O. Its function is as follows. Catalyzes the reversible cleavage of pseudouridine 5'-phosphate (PsiMP) to ribose 5-phosphate and uracil. Functions biologically in the cleavage direction, as part of a pseudouridine degradation pathway. The chain is Pseudouridine-5'-phosphate glycosidase 1 from Photorhabdus laumondii subsp. laumondii (strain DSM 15139 / CIP 105565 / TT01) (Photorhabdus luminescens subsp. laumondii).